Here is a 935-residue protein sequence, read N- to C-terminus: Isoleucine--tRNA ligase (935 aa).

The short motif at 58-68 (PYANGSIHVGH) is the 'HIGH' region element. Glutamate 558 is an L-isoleucyl-5'-AMP binding site. The short motif at 599–603 (KMSKS) is the 'KMSKS' region element. ATP is bound at residue lysine 602. Zn(2+) is bound by residues cysteine 897, cysteine 900, cysteine 917, and cysteine 920.

The protein belongs to the class-I aminoacyl-tRNA synthetase family. IleS type 1 subfamily. As to quaternary structure, monomer. Zn(2+) is required as a cofactor.

It localises to the cytoplasm. It catalyses the reaction tRNA(Ile) + L-isoleucine + ATP = L-isoleucyl-tRNA(Ile) + AMP + diphosphate. Its function is as follows. Catalyzes the attachment of isoleucine to tRNA(Ile). As IleRS can inadvertently accommodate and process structurally similar amino acids such as valine, to avoid such errors it has two additional distinct tRNA(Ile)-dependent editing activities. One activity is designated as 'pretransfer' editing and involves the hydrolysis of activated Val-AMP. The other activity is designated 'posttransfer' editing and involves deacylation of mischarged Val-tRNA(Ile). The protein is Isoleucine--tRNA ligase of Francisella philomiragia subsp. philomiragia (strain ATCC 25017 / CCUG 19701 / FSC 153 / O#319-036).